Consider the following 961-residue polypeptide: ATPase 7, plasma membrane-type (961 aa).

At 1–64 (MTDIEALKAI…EKKESKILKF (64 aa)) the chain is on the cytoplasmic side. A helical transmembrane segment spans residues 65–84 (LGFMWNPLSWVMEAAALMAI). Topologically, residues 85–96 (GLAHGGGKPADY) are extracellular. Residues 97–117 (HDFVGIVVLLLINSTISFVEE) traverse the membrane as a helical segment. Residues 118-246 (NNAGNAAAAL…GHFQKVLTAI (129 aa)) are Cytoplasmic-facing. The helical transmembrane segment at 247 to 267 (GNFCICSIAVGMAIEIVVIYG) threads the bilayer. Residues 268-276 (LQKRGYRVG) are Extracellular-facing. Residues 277 to 294 (IDNLLVLLIGGIPIAMPT) form a helical membrane-spanning segment. Residues 295–643 (VLSVTMAIGA…TSRAIFQRMK (349 aa)) lie on the Cytoplasmic side of the membrane. Aspartate 332 (4-aspartylphosphate intermediate) is an active-site residue. Residues aspartate 588 and aspartate 592 each contribute to the Mg(2+) site. Residues 644–665 (NYTIYAVSITIRIVMGFMLLCV) traverse the membrane as a helical segment. At 666–670 (FWEFD) the chain is on the extracellular side. A helical membrane pass occupies residues 671 to 693 (FPPFMVLVIAILNDGTIMTISKD). The Cytoplasmic segment spans residues 694–709 (RVKPSPTPDCWKLKEI). The helical transmembrane segment at 710–730 (FATGVVLGAYLAIMTVVFFWA) threads the bilayer. Residues 731–764 (AYETNFFHNIFHVRNFNQHHFKMKDKKVAAHLNE) lie on the Extracellular side of the membrane. The helical transmembrane segment at 765 to 785 (QMASAVYLQVSTISQALIFVT) threads the bilayer. The Cytoplasmic segment spans residues 786–797 (RSRSWSFVERPG). A helical transmembrane segment spans residues 798–818 (FLLVIAFLIAQLVASVISAMA). Topologically, residues 819–826 (NWPFAGIR) are extracellular. Residues 827 to 847 (SIGWGWTGVIWIFNIVTYMLL) traverse the membrane as a helical segment. At 848-961 (DPIKFLVRYA…EDPNSNNYTI (114 aa)) the chain is on the cytoplasmic side. Threonine 894 is subject to Phosphothreonine. Serine 910 and serine 942 each carry phosphoserine. Residues 959–961 (YTI) form an interaction with 14-3-3 proteins region. Threonine 960 carries the phosphothreonine modification.

The protein belongs to the cation transport ATPase (P-type) (TC 3.A.3) family. Type IIIA subfamily. Binds to 14-3-3 proteins. The binding is induced by phosphorylation of Thr-960. Binding to 14-3-3 proteins activates the H(+)-ATPase. Expressed in guard cells, roots and leaves, and barely in mesophyll cells.

It is found in the membrane. The enzyme catalyses ATP + H2O + H(+)(in) = ADP + phosphate + 2 H(+)(out). The plasma membrane H(+) ATPase of plants and fungi generates a proton gradient that drives the active transport of nutrients by H(+)-symport. The resulting external acidification and/or internal alkinization may mediate growth responses. In Arabidopsis thaliana (Mouse-ear cress), this protein is ATPase 7, plasma membrane-type (AHA7).